The following is a 259-amino-acid chain: Global transcriptional regulator CodY (259 aa).

Residues 1–155 (MNLLEKTRKI…GATVVGMEIL (155 aa)) form a GAF domain region. The H-T-H motif DNA-binding region spans 203-222 (ASKIADRVGITRSVIVNALR). Residue Ser-215 is modified to Phosphoserine.

The protein belongs to the CodY family.

It localises to the cytoplasm. Its function is as follows. DNA-binding global transcriptional regulator which is involved in the adaptive response to starvation and acts by directly or indirectly controlling the expression of numerous genes in response to nutrient availability. During rapid exponential growth, CodY is highly active and represses genes whose products allow adaptation to nutrient depletion. This chain is Global transcriptional regulator CodY, found in Anoxybacillus flavithermus (strain DSM 21510 / WK1).